Consider the following 590-residue polypeptide: Pentatricopeptide repeat-containing protein At2g46050, mitochondrial (590 aa).

A mitochondrion-targeting transit peptide spans 1 to 109 (MRFTFLRSTR…RNIVTWNILI (109 aa)). PPR repeat units follow at residues 141-175 (DHVS…GLES), 176-206 (SCFP…VLDR), 207-241 (DLVL…KNRF), 244-266 (DYFT…IHAI), 275-305 (DIPV…MVVR), 306-340 (NVVS…NLQP), 341-375 (DELT…GSAD), 376-406 (FLSV…IREP), 407-437 (DLVS…MLQK), 441-471 (DKIT…MTEF), and 477-507 (EDEH…MPTE). The interval 512–588 (ALAAFTGGCN…TPGCSWLGDY (77 aa)) is type E motif.

It belongs to the PPR family. PCMP-E subfamily.

It is found in the mitochondrion. The protein is Pentatricopeptide repeat-containing protein At2g46050, mitochondrial (PCMP-E39) of Arabidopsis thaliana (Mouse-ear cress).